We begin with the raw amino-acid sequence, 390 residues long: Methylthioribose-1-phosphate isomerase (390 aa).

Catalysis depends on aspartate 258, which acts as the Proton donor.

Belongs to the eIF-2B alpha/beta/delta subunits family. MtnA subfamily.

The protein resides in the cytoplasm. Its subcellular location is the nucleus. It carries out the reaction 5-(methylsulfanyl)-alpha-D-ribose 1-phosphate = 5-(methylsulfanyl)-D-ribulose 1-phosphate. It functions in the pathway amino-acid biosynthesis; L-methionine biosynthesis via salvage pathway; L-methionine from S-methyl-5-thio-alpha-D-ribose 1-phosphate: step 1/6. In terms of biological role, catalyzes the interconversion of methylthioribose-1-phosphate (MTR-1-P) into methylthioribulose-1-phosphate (MTRu-1-P). The protein is Methylthioribose-1-phosphate isomerase of Coccidioides posadasii (strain C735) (Valley fever fungus).